We begin with the raw amino-acid sequence, 485 residues long: dTDP-4-amino-4,6-dideoxy-D-glucose ammonia-lyase (485 aa).

[4Fe-4S] cluster contacts are provided by C141, C145, and C148.

It belongs to the radical SAM superfamily. DesII family. In terms of assembly, monomer. [4Fe-4S] cluster is required as a cofactor.

It carries out the reaction dTDP-4-amino-4,6-dideoxy-alpha-D-glucose + AH2 + S-adenosyl-L-methionine = dTDP-3-dehydro-4,6-dideoxy-alpha-D-glucose + 5'-deoxyadenosine + L-methionine + A + NH4(+) + H(+). In terms of biological role, involved in the biosynthesis of dTDP-alpha-D-desosamine, a sugar found in several bacterial macrolide antibiotics. Catalyzes the SAM-dependent deamination of dTDP-4-amino-4,6-deoxyglucose (dTDP-viosamine) to yield dTDP-3-keto-4,6-deoxyglucose. It can also catalyze the oxidative dehydrogenation of the non-physiological substrate dTDP-D-quinovose to dTDP-3-keto-6-deoxy-d-glucose. It can also deaminate dTDP-3-amino-3,6-deoxyglucose. The chain is dTDP-4-amino-4,6-dideoxy-D-glucose ammonia-lyase from Streptomyces venezuelae.